Here is a 229-residue protein sequence, read N- to C-terminus: Endonuclease V (229 aa).

Residues D36 and D104 each coordinate Mg(2+).

This sequence belongs to the endonuclease V family. Mg(2+) serves as cofactor.

The protein localises to the cytoplasm. It catalyses the reaction Endonucleolytic cleavage at apurinic or apyrimidinic sites to products with a 5'-phosphate.. Its function is as follows. DNA repair enzyme involved in the repair of deaminated bases. Selectively cleaves double-stranded DNA at the second phosphodiester bond 3' to a deoxyinosine leaving behind the intact lesion on the nicked DNA. This Pectobacterium carotovorum subsp. carotovorum (strain PC1) protein is Endonuclease V.